We begin with the raw amino-acid sequence, 367 residues long: Glutamate 5-kinase (367 aa).

Lys17 lines the ATP pocket. Substrate is bound by residues Ser57, Asp144, and Asn156. Residues 176–177 (SD) and 217–223 (TGGMVSK) each bind ATP. One can recognise a PUA domain in the interval 279 to 357 (VGSLTLDEGA…SELPCELRRP (79 aa)).

Belongs to the glutamate 5-kinase family.

It is found in the cytoplasm. It carries out the reaction L-glutamate + ATP = L-glutamyl 5-phosphate + ADP. It participates in amino-acid biosynthesis; L-proline biosynthesis; L-glutamate 5-semialdehyde from L-glutamate: step 1/2. In terms of biological role, catalyzes the transfer of a phosphate group to glutamate to form L-glutamate 5-phosphate. The chain is Glutamate 5-kinase from Mycobacterium leprae (strain Br4923).